We begin with the raw amino-acid sequence, 179 residues long: Large ribosomal subunit protein uL5 (179 aa).

The protein belongs to the universal ribosomal protein uL5 family. As to quaternary structure, part of the 50S ribosomal subunit; part of the 5S rRNA/L5/L18/L25 subcomplex. Contacts the 5S rRNA and the P site tRNA. Forms a bridge to the 30S subunit in the 70S ribosome.

This is one of the proteins that bind and probably mediate the attachment of the 5S RNA into the large ribosomal subunit, where it forms part of the central protuberance. In the 70S ribosome it contacts protein S13 of the 30S subunit (bridge B1b), connecting the 2 subunits; this bridge is implicated in subunit movement. Contacts the P site tRNA; the 5S rRNA and some of its associated proteins might help stabilize positioning of ribosome-bound tRNAs. This Shewanella oneidensis (strain ATCC 700550 / JCM 31522 / CIP 106686 / LMG 19005 / NCIMB 14063 / MR-1) protein is Large ribosomal subunit protein uL5.